Reading from the N-terminus, the 254-residue chain is Trans-aconitate 2-methyltransferase (254 aa).

It belongs to the methyltransferase superfamily. Tam family.

The protein resides in the cytoplasm. The catalysed reaction is trans-aconitate + S-adenosyl-L-methionine = (E)-3-(methoxycarbonyl)pent-2-enedioate + S-adenosyl-L-homocysteine. Functionally, catalyzes the S-adenosylmethionine monomethyl esterification of trans-aconitate. This chain is Trans-aconitate 2-methyltransferase, found in Mycobacterium sp. (strain JLS).